A 459-amino-acid chain; its full sequence is Bifunctional protein GlmU (459 aa).

Residues 1–229 (MSNFAIXLAA…FDESLGVNDR (229 aa)) form a pyrophosphorylase region. Residues 8–11 (LAAG), K22, Q72, and 77–78 (GT) each bind UDP-N-acetyl-alpha-D-glucosamine. D102 provides a ligand contact to Mg(2+). UDP-N-acetyl-alpha-D-glucosamine-binding residues include G139, E154, N169, and N227. N227 is a binding site for Mg(2+). The linker stretch occupies residues 230-250 (VALATAESVMRRRINHKHMVN). Residues 251-459 (GVSFVNPEAT…TRLPHHPKNQ (209 aa)) are N-acetyltransferase. UDP-N-acetyl-alpha-D-glucosamine contacts are provided by R332 and K350. The active-site Proton acceptor is H362. UDP-N-acetyl-alpha-D-glucosamine is bound by residues Y365 and N376. Residues A379, 385-386 (NY), S404, A422, and R439 each bind acetyl-CoA.

This sequence in the N-terminal section; belongs to the N-acetylglucosamine-1-phosphate uridyltransferase family. The protein in the C-terminal section; belongs to the transferase hexapeptide repeat family. In terms of assembly, homotrimer. Mg(2+) is required as a cofactor.

It localises to the cytoplasm. It catalyses the reaction alpha-D-glucosamine 1-phosphate + acetyl-CoA = N-acetyl-alpha-D-glucosamine 1-phosphate + CoA + H(+). The catalysed reaction is N-acetyl-alpha-D-glucosamine 1-phosphate + UTP + H(+) = UDP-N-acetyl-alpha-D-glucosamine + diphosphate. It functions in the pathway nucleotide-sugar biosynthesis; UDP-N-acetyl-alpha-D-glucosamine biosynthesis; N-acetyl-alpha-D-glucosamine 1-phosphate from alpha-D-glucosamine 6-phosphate (route II): step 2/2. It participates in nucleotide-sugar biosynthesis; UDP-N-acetyl-alpha-D-glucosamine biosynthesis; UDP-N-acetyl-alpha-D-glucosamine from N-acetyl-alpha-D-glucosamine 1-phosphate: step 1/1. The protein operates within bacterial outer membrane biogenesis; LPS lipid A biosynthesis. Functionally, catalyzes the last two sequential reactions in the de novo biosynthetic pathway for UDP-N-acetylglucosamine (UDP-GlcNAc). The C-terminal domain catalyzes the transfer of acetyl group from acetyl coenzyme A to glucosamine-1-phosphate (GlcN-1-P) to produce N-acetylglucosamine-1-phosphate (GlcNAc-1-P), which is converted into UDP-GlcNAc by the transfer of uridine 5-monophosphate (from uridine 5-triphosphate), a reaction catalyzed by the N-terminal domain. This chain is Bifunctional protein GlmU, found in Streptococcus pneumoniae serotype 19F (strain G54).